The primary structure comprises 136 residues: MAKKKIVIGVIGSDCHTVGNKIIHNKLEESGFDVVNIGALSPQIDFINAALETNSDAIIVSSIYGYGELDCQGIREKCNEYGLKDILLYIGGNIGSSNEKWENTEKRFKEMGFDRIYKPGTPIEETIIDLKKDFKI.

In terms of domain architecture, B12-binding spans 3-136; the sequence is KKKIVIGVIG…IIDLKKDFKI (134 aa). Adenosylcob(III)alamin contacts are provided by residues 13–17, His-16, and 61–63; these read SDCHT and SSI.

The protein belongs to the methylaspartate mutase GlmS subunit family. As to quaternary structure, heterotetramer composed of 2 epsilon subunits (GlmE) and 2 sigma subunits (GlmS). GlmE exists as a homodimer and GlmS as a monomer. It depends on adenosylcob(III)alamin as a cofactor.

It catalyses the reaction (2S,3S)-3-methyl-L-aspartate = L-glutamate. It participates in amino-acid degradation; L-glutamate degradation via mesaconate pathway; acetate and pyruvate from L-glutamate: step 1/4. Its function is as follows. Catalyzes the carbon skeleton rearrangement of L-glutamate to L-threo-3-methylaspartate ((2S,3S)-3-methylaspartate). This Fusobacterium nucleatum subsp. nucleatum (strain ATCC 25586 / DSM 15643 / BCRC 10681 / CIP 101130 / JCM 8532 / KCTC 2640 / LMG 13131 / VPI 4355) protein is Glutamate mutase sigma subunit.